Here is a 215-residue protein sequence, read N- to C-terminus: Ribosomal RNA small subunit methyltransferase G (215 aa).

S-adenosyl-L-methionine is bound by residues Gly-78, Leu-83, 128–129 (AE), and Arg-146.

This sequence belongs to the methyltransferase superfamily. RNA methyltransferase RsmG family.

The protein localises to the cytoplasm. It carries out the reaction guanosine(527) in 16S rRNA + S-adenosyl-L-methionine = N(7)-methylguanosine(527) in 16S rRNA + S-adenosyl-L-homocysteine. Functionally, specifically methylates the N7 position of guanine in position 527 of 16S rRNA. This Anaeromyxobacter dehalogenans (strain 2CP-1 / ATCC BAA-258) protein is Ribosomal RNA small subunit methyltransferase G.